We begin with the raw amino-acid sequence, 734 residues long: Ribosomal RNA large subunit methyltransferase K/L (734 aa).

In terms of domain architecture, THUMP spans 49-167 (QAYRVCMWSR…KTEHTYCLDL (119 aa)).

This sequence belongs to the methyltransferase superfamily. RlmKL family.

Its subcellular location is the cytoplasm. The enzyme catalyses guanosine(2445) in 23S rRNA + S-adenosyl-L-methionine = N(2)-methylguanosine(2445) in 23S rRNA + S-adenosyl-L-homocysteine + H(+). The catalysed reaction is guanosine(2069) in 23S rRNA + S-adenosyl-L-methionine = N(2)-methylguanosine(2069) in 23S rRNA + S-adenosyl-L-homocysteine + H(+). Its function is as follows. Specifically methylates the guanine in position 2445 (m2G2445) and the guanine in position 2069 (m7G2069) of 23S rRNA. In Acinetobacter baylyi (strain ATCC 33305 / BD413 / ADP1), this protein is Ribosomal RNA large subunit methyltransferase K/L.